The chain runs to 413 residues: MAITLSATSLPISAADHHPLPLTVGVLGSGHAGTALAAWFASRHVPTALWAPADHPGSISAIKANEGVITTEGMINGPFRVSACDDLAAVIRSSRVLIIVTRADVHDSFVNELANFNGELATKDIVVVCGHGFSIKYERQLRFKRIFETDNSPITSKLSDQKKCNVNIKEMKASFGLSCFPIHRDDAGVIDLPEDTKNIFAQLFSARIICIPPLQVLFFSNCITHAVPAVMNIGRLRDPANSLTKRAEKWLLELDERTPRAEKGFFFYGEGSNTYVCNVQEQIDHERRKVAAACGLRLNSLLQECNDEYDTDYETLREYCLAPSPHNVHHACPDNMEHRYFSEELCSLEDVAAIAAIANIELPLTHAFINIIHAGKGKINPTGKSSSVIGNFSSSDLIRFGATHVFNKDEMVE.

This sequence belongs to the lysopine/nopaline/octopine/opine/vitopine dehydrogenases family. Homotetramer.

It catalyses the reaction D-nopaline + NADP(+) + H2O = L-arginine + 2-oxoglutarate + NADPH + H(+). This is D-nopaline dehydrogenase (nos) from Agrobacterium tumefaciens (strain T37).